The sequence spans 264 residues: Phosphate import ATP-binding protein PstB 1 (264 aa).

Positions 20-259 (LETRDLNIFY…PKIKLTEDYI (240 aa)) constitute an ABC transporter domain. Residue 52-59 (GASGSGKS) coordinates ATP.

It belongs to the ABC transporter superfamily. Phosphate importer (TC 3.A.1.7) family. In terms of assembly, the complex is composed of two ATP-binding proteins (PstB), two transmembrane proteins (PstC and PstA) and a solute-binding protein (PstS).

The protein localises to the cell membrane. It carries out the reaction phosphate(out) + ATP + H2O = ADP + 2 phosphate(in) + H(+). In terms of biological role, part of the ABC transporter complex PstSACB involved in phosphate import. Responsible for energy coupling to the transport system. This chain is Phosphate import ATP-binding protein PstB 1, found in Ligilactobacillus salivarius (strain UCC118) (Lactobacillus salivarius).